The sequence spans 682 residues: Potassium-transporting ATPase ATP-binding subunit (682 aa).

Transmembrane regions (helical) follow at residues 34–54 (PVMF…IAMA), 62–82 (ALFS…ANFA), 219–239 (IALT…TATL), and 254–274 (VLVA…LSAI). The active-site 4-aspartylphosphate intermediate is Asp-307. ATP contacts are provided by residues Asp-344, Glu-348, 377 to 384 (FTAQSRMS), and Lys-395. Residues Asp-518 and Asp-522 each coordinate Mg(2+). Transmembrane regions (helical) follow at residues 588 to 608 (FAII…LNIM), 616 to 636 (AILS…PLAL), and 656 to 676 (IYGL…DLLL).

It belongs to the cation transport ATPase (P-type) (TC 3.A.3) family. Type IA subfamily. As to quaternary structure, the system is composed of three essential subunits: KdpA, KdpB and KdpC.

It is found in the cell inner membrane. It carries out the reaction K(+)(out) + ATP + H2O = K(+)(in) + ADP + phosphate + H(+). Part of the high-affinity ATP-driven potassium transport (or Kdp) system, which catalyzes the hydrolysis of ATP coupled with the electrogenic transport of potassium into the cytoplasm. This subunit is responsible for energy coupling to the transport system and for the release of the potassium ions to the cytoplasm. The chain is Potassium-transporting ATPase ATP-binding subunit from Escherichia coli O157:H7 (strain EC4115 / EHEC).